We begin with the raw amino-acid sequence, 756 residues long: Virulence factor MDV010 (756 aa).

Residues 1 to 30 (MPSKSIADHHAGYGVALAIVALLLIHGTAL) form the signal peptide. The interval 96-120 (EEHITLSSPRTSTKTTNENGHEKDS) is disordered. Residues 100–113 (TLSSPRTSTKTTNE) are compositionally biased toward polar residues. Asn222, Asn241, Asn287, Asn423, Asn495, Asn542, Asn552, Asn580, Asn660, Asn684, Asn715, and Asn744 each carry an N-linked (GlcNAc...) asparagine; by host glycan.

It is found in the secreted. Functionally, may play a role in host immune modulation since the protein is secreted and provides an advantage for growth in vivo while it is completely dispensable in cell culture. This is Virulence factor MDV010 (MDV010) from Gallid herpesvirus 2 (strain Chicken/Md5/ATCC VR-987) (GaHV-2).